Consider the following 332-residue polypeptide: MSKNERRTFLLDFEKPLWELEARIEQIRHLAEENNVDVSEQIAQLESRAQNLRQEIFSSLTPSQRLQLARHPRRPSTLDYIQSIADEWFELHGDRGGYDDPALVGGVARLGGRPVVILGHQKGRDTKDNVARNFGMPAPGGYRKAIRLMEHANQFSMPILTFIDTPGAWAGVDAEKLGQGEAIAFNLRQMFSFDVPIICTVIGEGGSGGALGIGVGDKLMMLEHAVYTVATPEACAAILWKDAKKSSQAAVALKITAKDLKELGIIDTIIPEPSGAAHVNPLEAAAILKETLVNNLEELSNLTPEERKTLRYEKFRQIGVFLESDSNLALHS.

Residues 44 to 298 form the CoA carboxyltransferase C-terminal domain; it reads QLESRAQNLR…KETLVNNLEE (255 aa).

Belongs to the AccA family. Acetyl-CoA carboxylase is a heterohexamer composed of biotin carboxyl carrier protein (AccB), biotin carboxylase (AccC) and two subunits each of ACCase subunit alpha (AccA) and ACCase subunit beta (AccD).

It is found in the cytoplasm. The catalysed reaction is N(6)-carboxybiotinyl-L-lysyl-[protein] + acetyl-CoA = N(6)-biotinyl-L-lysyl-[protein] + malonyl-CoA. It participates in lipid metabolism; malonyl-CoA biosynthesis; malonyl-CoA from acetyl-CoA: step 1/1. Functionally, component of the acetyl coenzyme A carboxylase (ACC) complex. First, biotin carboxylase catalyzes the carboxylation of biotin on its carrier protein (BCCP) and then the CO(2) group is transferred by the carboxyltransferase to acetyl-CoA to form malonyl-CoA. This Crocosphaera subtropica (strain ATCC 51142 / BH68) (Cyanothece sp. (strain ATCC 51142)) protein is Acetyl-coenzyme A carboxylase carboxyl transferase subunit alpha.